An 83-amino-acid polypeptide reads, in one-letter code: Cytochrome b559 subunit alpha (83 aa).

Residues 21-35 (VIHSITIPSLFIAGW) form a helical membrane-spanning segment. A heme-binding site is contributed by His23.

The protein belongs to the PsbE/PsbF family. Heterodimer of an alpha subunit and a beta subunit. PSII is composed of 1 copy each of membrane proteins PsbA, PsbB, PsbC, PsbD, PsbE, PsbF, PsbH, PsbI, PsbJ, PsbK, PsbL, PsbM, PsbT, PsbX, PsbY, PsbZ, Psb30/Ycf12, at least 3 peripheral proteins of the oxygen-evolving complex and a large number of cofactors. It forms dimeric complexes. Heme b is required as a cofactor.

It is found in the plastid. The protein resides in the chloroplast thylakoid membrane. Its function is as follows. This b-type cytochrome is tightly associated with the reaction center of photosystem II (PSII). PSII is a light-driven water:plastoquinone oxidoreductase that uses light energy to abstract electrons from H(2)O, generating O(2) and a proton gradient subsequently used for ATP formation. It consists of a core antenna complex that captures photons, and an electron transfer chain that converts photonic excitation into a charge separation. This is Cytochrome b559 subunit alpha from Psilotum nudum (Whisk fern).